The sequence spans 433 residues: Tol-Pal system protein TolB (433 aa).

The first 26 residues, 1–26 (MNKLRLFRSFFAFLLPFGMATGAAHG), serve as a signal peptide directing secretion.

It belongs to the TolB family. In terms of assembly, the Tol-Pal system is composed of five core proteins: the inner membrane proteins TolA, TolQ and TolR, the periplasmic protein TolB and the outer membrane protein Pal. They form a network linking the inner and outer membranes and the peptidoglycan layer.

It localises to the periplasm. In terms of biological role, part of the Tol-Pal system, which plays a role in outer membrane invagination during cell division and is important for maintaining outer membrane integrity. The sequence is that of Tol-Pal system protein TolB from Methylobacillus flagellatus (strain ATCC 51484 / DSM 6875 / VKM B-1610 / KT).